The following is a 247-amino-acid chain: Adenosylcobinamide-GDP ribazoletransferase (247 aa).

5 helical membrane-spanning segments follow: residues 34-54 (IITF…VFMV), 59-79 (CGVP…TGGF), 113-133 (GGLA…ELTL), 138-158 (ILAS…LLMY), and 194-214 (VLLP…AIFI).

Belongs to the CobS family. The cofactor is Mg(2+).

The protein resides in the cell inner membrane. It catalyses the reaction alpha-ribazole + adenosylcob(III)inamide-GDP = adenosylcob(III)alamin + GMP + H(+). The enzyme catalyses alpha-ribazole 5'-phosphate + adenosylcob(III)inamide-GDP = adenosylcob(III)alamin 5'-phosphate + GMP + H(+). The protein operates within cofactor biosynthesis; adenosylcobalamin biosynthesis; adenosylcobalamin from cob(II)yrinate a,c-diamide: step 7/7. In terms of biological role, joins adenosylcobinamide-GDP and alpha-ribazole to generate adenosylcobalamin (Ado-cobalamin). Also synthesizes adenosylcobalamin 5'-phosphate from adenosylcobinamide-GDP and alpha-ribazole 5'-phosphate. This Escherichia coli O127:H6 (strain E2348/69 / EPEC) protein is Adenosylcobinamide-GDP ribazoletransferase.